A 160-amino-acid polypeptide reads, in one-letter code: Transcription elongation factor GreA (160 aa).

A coiled-coil region spans residues 8–28 (LTEEGLKQLEAELEHLIQVKR).

It belongs to the GreA/GreB family.

Functionally, necessary for efficient RNA polymerase transcription elongation past template-encoded arresting sites. The arresting sites in DNA have the property of trapping a certain fraction of elongating RNA polymerases that pass through, resulting in locked ternary complexes. Cleavage of the nascent transcript by cleavage factors such as GreA or GreB allows the resumption of elongation from the new 3'terminus. GreA releases sequences of 2 to 3 nucleotides. In Mycoplasma pneumoniae (strain ATCC 29342 / M129 / Subtype 1) (Mycoplasmoides pneumoniae), this protein is Transcription elongation factor GreA.